The sequence spans 614 residues: Autophagy-related protein 22-1 (614 aa).

A disordered region spans residues 1–29 (MQNCTNSPEDQAASVCPPPPQFPGDDTRP). A glycan (N-linked (GlcNAc...) asparagine) is linked at Asn3. The next 4 membrane-spanning stretches (helical) occupy residues 41 to 61 (YGWA…PITL), 126 to 146 (TASF…ILII), 160 to 180 (MLLV…LAVV), and 185 to 205 (LLGG…FVLL). Residues 229 to 254 (PTGTSHDSTSTADGPGQTDGTETTSL) are disordered. Residues 230-254 (TGTSHDSTSTADGPGQTDGTETTSL) are compositionally biased toward polar residues. The next 8 membrane-spanning stretches (helical) occupy residues 291 to 311 (GIGI…LVVV), 322 to 342 (LVLF…AMWL), 383 to 403 (ILLF…VSGT), 417 to 437 (AALG…AFSW), 452 to 472 (IVAC…GFIP), 486 to 506 (WEMY…SSYC), 523 to 545 (YALY…GIIT), and 554 to 574 (AFVF…LVDV).

The protein belongs to the ATG22 family.

The protein localises to the vacuole membrane. Functionally, vacuolar effluxer which mediate the efflux of amino acids resulting from autophagic degradation. The release of autophagic amino acids allows the maintenance of protein synthesis and viability during nitrogen starvation. The sequence is that of Autophagy-related protein 22-1 (atg22-1) from Aspergillus niger (strain ATCC MYA-4892 / CBS 513.88 / FGSC A1513).